A 321-amino-acid polypeptide reads, in one-letter code: Tetraketide alpha-pyrone reductase 2 (321 aa).

Position 2 is an N-acetylserine (S2). NADP(+)-binding positions include 4–28 (YLVT…GHTV), K40, and Y160.

The protein belongs to the NAD(P)-dependent epimerase/dehydratase family. Dihydroflavonol-4-reductase subfamily.

It is found in the cytoplasm. In terms of biological role, may be involved in the biosynthesis of hydroxylated tetraketide compounds that serve as sporopollenin precursors (the main constituents of exine). Acts on tetraketide alpha-pyrones and reduces the carbonyl function on the tetraketide alkyl chain to a secondary alcohol function. The chain is Tetraketide alpha-pyrone reductase 2 (TKPR2) from Arabidopsis thaliana (Mouse-ear cress).